Reading from the N-terminus, the 162-residue chain is Cyclic pyranopterin monophosphate synthase (162 aa).

Substrate is bound by residues 75–77 and 113–114; these read LCH and ME. Residue aspartate 128 is part of the active site.

Belongs to the MoaC family. In terms of assembly, homohexamer; trimer of dimers.

It catalyses the reaction (8S)-3',8-cyclo-7,8-dihydroguanosine 5'-triphosphate = cyclic pyranopterin phosphate + diphosphate. It functions in the pathway cofactor biosynthesis; molybdopterin biosynthesis. Functionally, catalyzes the conversion of (8S)-3',8-cyclo-7,8-dihydroguanosine 5'-triphosphate to cyclic pyranopterin monophosphate (cPMP). This Burkholderia orbicola (strain MC0-3) protein is Cyclic pyranopterin monophosphate synthase.